The following is a 125-amino-acid chain: Aspartate 1-decarboxylase (125 aa).

Residue S25 is the Schiff-base intermediate with substrate; via pyruvic acid of the active site. S25 bears the Pyruvic acid (Ser) mark. Residue T57 coordinates substrate. Y58 acts as the Proton donor in catalysis. 71-73 (GAA) provides a ligand contact to substrate.

It belongs to the PanD family. In terms of assembly, heterooctamer of four alpha and four beta subunits. Requires pyruvate as cofactor. Post-translationally, is synthesized initially as an inactive proenzyme, which is activated by self-cleavage at a specific serine bond to produce a beta-subunit with a hydroxyl group at its C-terminus and an alpha-subunit with a pyruvoyl group at its N-terminus.

It localises to the cytoplasm. It carries out the reaction L-aspartate + H(+) = beta-alanine + CO2. It participates in cofactor biosynthesis; (R)-pantothenate biosynthesis; beta-alanine from L-aspartate: step 1/1. In terms of biological role, catalyzes the pyruvoyl-dependent decarboxylation of aspartate to produce beta-alanine. The sequence is that of Aspartate 1-decarboxylase from Hydrogenobaculum sp. (strain Y04AAS1).